Here is a 562-residue protein sequence, read N- to C-terminus: 63 kDa globulin-like protein (562 aa).

A signal peptide spans methionine 1–alanine 23. The segment covering glutamine 63–glycine 88 has biased composition (basic and acidic residues). The interval glutamine 63–arginine 103 is disordered. 2 Cupin type-1 domains span residues tyrosine 106–glutamate 264 and phenylalanine 312–aspartate 507. Asparagine 350 carries N-linked (GlcNAc...) asparagine glycosylation. 2 disordered regions span residues proline 383–glutamine 430 and serine 516–alanine 550. Positions arginine 390–glutamate 408 are enriched in basic and acidic residues. Positions glutamate 409 to glutamine 427 are enriched in acidic residues.

The protein belongs to the 7S seed storage protein family.

The protein localises to the secreted. Its function is as follows. Seed storage protein. The chain is 63 kDa globulin-like protein from Oryza sativa subsp. japonica (Rice).